We begin with the raw amino-acid sequence, 173 residues long: Cell division protein SepF (173 aa).

The segment at 17 to 85 is disordered; that stretch reads SDDEYISDET…NELRTITTVH (69 aa). Over residues 35–52 the composition is skewed to low complexity; the sequence is SAGGSSAAVSESGSTSVA.

This sequence belongs to the SepF family. In terms of assembly, homodimer. Interacts with FtsZ.

The protein resides in the cytoplasm. In terms of biological role, cell division protein that is part of the divisome complex and is recruited early to the Z-ring. Probably stimulates Z-ring formation, perhaps through the cross-linking of FtsZ protofilaments. Its function overlaps with FtsA. This is Cell division protein SepF from Kocuria rhizophila (strain ATCC 9341 / DSM 348 / NBRC 103217 / DC2201).